Consider the following 300-residue polypeptide: Bifunctional protein FolD (300 aa).

Residues 169–171, S196, and I237 each bind NADP(+); that span reads GRG.

This sequence belongs to the tetrahydrofolate dehydrogenase/cyclohydrolase family. In terms of assembly, homodimer.

It catalyses the reaction (6R)-5,10-methylene-5,6,7,8-tetrahydrofolate + NADP(+) = (6R)-5,10-methenyltetrahydrofolate + NADPH. The catalysed reaction is (6R)-5,10-methenyltetrahydrofolate + H2O = (6R)-10-formyltetrahydrofolate + H(+). It functions in the pathway one-carbon metabolism; tetrahydrofolate interconversion. In terms of biological role, catalyzes the oxidation of 5,10-methylenetetrahydrofolate to 5,10-methenyltetrahydrofolate and then the hydrolysis of 5,10-methenyltetrahydrofolate to 10-formyltetrahydrofolate. The chain is Bifunctional protein FolD from Clavibacter sepedonicus (Clavibacter michiganensis subsp. sepedonicus).